The following is an 880-amino-acid chain: DNA double-strand break repair Rad50 ATPase (880 aa).

ATP is bound by residues R12, 32 to 38 (NGSGKSS), and Q138. Coiled coils occupy residues 225–336 (GELE…VIKE) and 391–744 (GEVI…QALN). Residues 397-494 (LESLEKERTE…NLRKLEIKLR (98 aa)) form the Zinc-hook domain. 2 residues coordinate Zn(2+): C442 and C445. Residue 789 to 794 (FLSGGE) coordinates ATP.

This sequence belongs to the SMC family. RAD50 subfamily. In terms of assembly, homodimer. Forms a heterotetramer composed of two Mre11 subunits and two Rad50 subunits. Zn(2+) is required as a cofactor.

Part of the Rad50/Mre11 complex, which is involved in the early steps of DNA double-strand break (DSB) repair. The complex may facilitate opening of the processed DNA ends to aid in the recruitment of HerA and NurA. Rad50 controls the balance between DNA end bridging and DNA resection via ATP-dependent structural rearrangements of the Rad50/Mre11 complex. In Pyrococcus abyssi (strain GE5 / Orsay), this protein is DNA double-strand break repair Rad50 ATPase.